Here is a 381-residue protein sequence, read N- to C-terminus: MPFSSTHNKHKLKFSAEEEFPDLSKHNNHMAKVLTPELYKRLRDKETPSGFTLDDVIQTGVDNPGHPFIMTVGCVAGDEESYEVFKDLFDPVIQDRHGGYKPTDKHRTDLNHENLKGGDDLDPKYVLSSRVRTGRSIKGYSLPPHCSRGERRAVEKLSVEALNSLEGEFKGRYYPLKAMTEQEQQQLIDDHFLFDKPVSPLLLASGMARDWPDARGIWHNDNKTFLVWVNEEDHLRVISMEKGGNMKEVFRRFCVGLKKIEEIFKKAGHPFMWTEHLGYILTCPSNLGTGLRGGVHVKLPKLSQHPKFEEILHRLRLQKRGTGGVDTAAVGAVFDISNADRLGFSEVEQVQMVVDGVKLMVEMEKKLEQNQPIDDMIPAQK.

The Phosphagen kinase N-terminal domain occupies 11 to 98 (KLKFSAEEEF…FDPVIQDRHG (88 aa)). The interval 99–118 (GYKPTDKHRTDLNHENLKGG) is disordered. Residues 125–367 (YVLSSRVRTG…KLMVEMEKKL (243 aa)) enclose the Phosphagen kinase C-terminal domain. Residues 128–132 (SSRVR), H191, R236, R292, 320–325 (RGTGGV), and D335 each bind ATP.

Belongs to the ATP:guanido phosphotransferase family. Dimer of identical or non-identical chains, which can be either B (brain type) or M (muscle type). With MM being the major form in skeletal muscle and myocardium, MB existing in myocardium, and BB existing in many tissues, especially brain. Predominantly found in skeletal muscle, but not in the heart.

It is found in the cytoplasm. The catalysed reaction is creatine + ATP = N-phosphocreatine + ADP + H(+). Reversibly catalyzes the transfer of phosphate between ATP and various phosphogens (e.g. creatine phosphate). Creatine kinase isoenzymes play a central role in energy transduction in tissues with large, fluctuating energy demands, such as skeletal muscle, heart, brain and spermatozoa. This Gallus gallus (Chicken) protein is Creatine kinase M-type.